Reading from the N-terminus, the 701-residue chain is Elongation factor G (701 aa).

In terms of domain architecture, tr-type G spans 8 to 291 (GRYRNIGIVA…AVIDYLPAPT (284 aa)). Residues 17-24 (AHVDAGKT), 89-93 (DTPGH), and 143-146 (NKMD) each bind GTP.

The protein belongs to the TRAFAC class translation factor GTPase superfamily. Classic translation factor GTPase family. EF-G/EF-2 subfamily.

It localises to the cytoplasm. Functionally, catalyzes the GTP-dependent ribosomal translocation step during translation elongation. During this step, the ribosome changes from the pre-translocational (PRE) to the post-translocational (POST) state as the newly formed A-site-bound peptidyl-tRNA and P-site-bound deacylated tRNA move to the P and E sites, respectively. Catalyzes the coordinated movement of the two tRNA molecules, the mRNA and conformational changes in the ribosome. This Pseudomonas syringae pv. syringae (strain B728a) protein is Elongation factor G.